The chain runs to 208 residues: Small ribosomal subunit protein uS4 (208 aa).

The 62-residue stretch at 97-158 (TRLDNVIYRM…RAQKYLCVQE (62 aa)) folds into the S4 RNA-binding domain.

Belongs to the universal ribosomal protein uS4 family. Part of the 30S ribosomal subunit. Contacts protein S5. The interaction surface between S4 and S5 is involved in control of translational fidelity.

One of the primary rRNA binding proteins, it binds directly to 16S rRNA where it nucleates assembly of the body of the 30S subunit. Functionally, with S5 and S12 plays an important role in translational accuracy. In Xylella fastidiosa (strain M12), this protein is Small ribosomal subunit protein uS4.